Reading from the N-terminus, the 21-residue chain is Cutinase 2 (21 aa).

This sequence belongs to the cutinase family.

Its subcellular location is the secreted. The catalysed reaction is cutin + H2O = cutin monomers.. Inhibited by diisopropyl fluorophosphate (DFP). Its function is as follows. Catalyzes the hydrolysis of complex carboxylic polyesters found in the cell wall of plants. Degrades cutin, a macromolecule that forms the structure of the plant cuticle. Allows pathogenic fungi to penetrate through the cuticular barrier into the host plant during the initial stage of fungal infection. The sequence is that of Cutinase 2 from Colletotrichum gloeosporioides (Anthracnose fungus).